A 265-amino-acid polypeptide reads, in one-letter code: MKPTTISHLRQWKQEQRKFATITAYDASFSRLFFEQGIRVMLVGDSLGMTVQGHDSTLPVTTSDIVYHTQCVRRGAPLALVLSDMPFMTYATPEQTFSQAAELMRAGANMVKLEGGSWLAPTVKMLTERAVPVCGHLGLTPQSVNIFGGYKIQGRSESDANQLLADALALEEAGAQLLVLECVPVALAKRVTDALSIPVIGIGAGNVTDGQILVMHDAFGITGDNTPKFAKNFLAQSGGDIRAAVGLYAQEVEQGIYPAEEHSFH.

Residues Asp-45 and Asp-84 each coordinate Mg(2+). Residues 45-46 (DS), Asp-84, and Lys-112 each bind 3-methyl-2-oxobutanoate. Residue Glu-114 participates in Mg(2+) binding. Catalysis depends on Glu-181, which acts as the Proton acceptor.

The protein belongs to the PanB family. In terms of assembly, homodecamer; pentamer of dimers. Mg(2+) is required as a cofactor.

The protein localises to the cytoplasm. It catalyses the reaction 3-methyl-2-oxobutanoate + (6R)-5,10-methylene-5,6,7,8-tetrahydrofolate + H2O = 2-dehydropantoate + (6S)-5,6,7,8-tetrahydrofolate. The protein operates within cofactor biosynthesis; (R)-pantothenate biosynthesis; (R)-pantoate from 3-methyl-2-oxobutanoate: step 1/2. In terms of biological role, catalyzes the reversible reaction in which hydroxymethyl group from 5,10-methylenetetrahydrofolate is transferred onto alpha-ketoisovalerate to form ketopantoate. This Pectobacterium carotovorum subsp. carotovorum (strain PC1) protein is 3-methyl-2-oxobutanoate hydroxymethyltransferase.